The primary structure comprises 155 residues: Transcriptional regulator MraZ (155 aa).

SpoVT-AbrB domains lie at 5-52 and 81-124; these read TYEN…SQDR and SMNL…EPAA.

It belongs to the MraZ family. Forms oligomers.

It localises to the cytoplasm. The protein resides in the nucleoid. The polypeptide is Transcriptional regulator MraZ (Pelagibacter ubique (strain HTCC1062)).